Here is a 2276-residue protein sequence, read N- to C-terminus: Non-reducing polyketide synthase VdtA (2276 aa).

Residues 8–243 (YLFGDQTYDY…KDIPIHAPYH (236 aa)) are N-terminal acylcarrier protein transacylase (SAT) domain. Positions 372–804 (RAKIAIVGMS…GGNSSVLVED (433 aa)) constitute a Ketosynthase family 3 (KS3) domain. Residues Cys-544, His-679, and His-723 each act as for beta-ketoacyl synthase activity in the active site. A malonyl-CoA:ACP transacylase (MAT) domain region spans residues 905 to 1206 (FTFTGQGAQY…KALPTLQRNR (302 aa)). Ser-996 serves as the catalytic For acyl/malonyl transferase activity. The segment at 1300–1616 (TTTLHRIVDE…PRRVLRYILQ (317 aa)) is product template (PT) domain. Positions 1304–1438 (HRIVDEKSTE…CRIKFSDRST (135 aa)) are N-terminal hotdog fold. In terms of domain architecture, PKS/mFAS DH spans 1304 to 1612 (HRIVDEKSTE…IQGVPRRVLR (309 aa)). Residue His-1336 is the Proton acceptor; for dehydratase activity of the active site. Residues 1465 to 1612 (TYRFNGPMAY…IQGVPRRVLR (148 aa)) are C-terminal hotdog fold. Catalysis depends on Asp-1525, which acts as the Proton donor; for dehydratase activity. A Carrier 1 domain is found at 1655-1729 (SGTLTEALRI…DLKRFFDKIN (75 aa)). The residue at position 1689 (Ser-1689) is an O-(pantetheine 4'-phosphoryl)serine. The segment at 1735-1762 (APAPVSDAPKQLQPSSSPVASATPSAPI) is disordered. Over residues 1748–1761 (PSSSPVASATPSAP) the composition is skewed to low complexity. A Carrier 2 domain is found at 1765-1839 (RSKFESVLNI…DLKAHFMSKN (75 aa)). At Ser-1799 the chain carries O-(pantetheine 4'-phosphoryl)serine. Over residues 1840–1854 (SDNGSSAVLTPQPSR) the composition is skewed to polar residues. Residues 1840 to 1882 (SDNGSSAVLTPQPSRDSALPERTRPRVADTSDEEDAPVSANEF) are disordered. Basic and acidic residues predominate over residues 1857–1868 (ALPERTRPRVAD). Positions 1886–1964 (ARSTSKYMAV…GLRSFFGFES (79 aa)) constitute a Carrier 3 domain. O-(pantetheine 4'-phosphoryl)serine is present on Ser-1923. The interval 1967-1993 (TATNPTASQSSSSISSGTSVFDTSPSP) is disordered. Residues 1969–1990 (TNPTASQSSSSISSGTSVFDTS) are compositionally biased toward low complexity. The thioesterase (TE) domain stretch occupies residues 2020–2271 (PLPPATSVTL…GADHFSLLVS (252 aa)).

The protein localises to the cytoplasmic vesicle. It catalyses the reaction 7 malonyl-CoA + acetyl-CoA + 7 H(+) = 7,9,10-trihydroxy-3-(2-oxopropyl)-1H-benzo[g]isochromen-1-one + 7 CO2 + 8 CoA + 2 H2O. It functions in the pathway secondary metabolite biosynthesis. Non-reducing polyketide synthase; part of the gene cluster that mediates the biosynthesis of viriditoxin, one of the 'classical' secondary metabolites produced by fungi and that has antibacterial activity. The first step is performed by the polyketide synthase VdtA which condenses one acetyl-CoA and 6 malonyl-CoA units to form the heptaketide monomer backbone of viriditoxin. The product of VdtA is then O-methylated on C7 by the O-methyltransferase VdtC. The O-methyl group is important for the stereoselective coupling of the monomers at the final step of viriditoxin biosynthesis. The short-chain dehydrogenase/reductase VdtF then acts as a stereospecific reductase converting the pyrone to dihydropyrone via the reduction of the C3-C4 double bond. The FAD-binding monooxygenase VdtE then converts the ketone group into a methyl-ester group to yield semi-viriditoxin. Finally, the laccase VdtB is involved in dimerization of 2 semi-viriditoxin molecules to yield the final viriditoxin. VdtB is responsible for the regioselective 6,6'-coupling of semi-viriditoxin, which yields (M)-viriditoxin and (P)-viriditoxin at a ratio of 1:2. The non-catalytic carboxylesterase-like protein VdtD affects the stereochemistical outcome of the coupling. The highly reducing polyketide synthase VdtX is not involved in viriditoxin synthesis, but might possibly play a role in the production of additional metabolites not identified yet. In Byssochlamys spectabilis (Paecilomyces variotii), this protein is Non-reducing polyketide synthase VdtA.